We begin with the raw amino-acid sequence, 528 residues long: OLD nuclease (528 aa).

An ATPase domain N-terminus region spans residues 1-153 (MLKRLQVKNF…LAQHLPSIRG (153 aa)). Residue 31–35 (GAGKT) coordinates ATP. Positions 154 to 245 (SILGRLLQPV…RESDLTLPGD (92 aa)) are dimerization domain. The tract at residues 246–369 (ELGLGIQSAI…FDTARNEVLF (124 aa)) is ATPase domain C-terminus. The interval 370–528 (AKRALLVEGY…IRQVTRPMEE (159 aa)) is toprim domain. Positions 377, 381, 431, and 433 each coordinate a divalent metal cation. The disordered stretch occupies residues 440 to 461 (RADEETRRKQEQENKAEQEKNQ). Residues S478 and E480 each contribute to the a divalent metal cation site. R487 functions as the Stabilizes transition state or protonates leaving group in the catalytic mechanism.

The protein belongs to the class 1 OLD nuclease family. As to quaternary structure, homodimer. Mg(2+) serves as cofactor. Mn(2+) is required as a cofactor. It depends on Ca(2+) as a cofactor.

It carries out the reaction Exonucleolytic cleavage in the 5'- to 3'-direction to yield nucleoside 5'-phosphates.. In terms of biological role, an exodeoxyribonuclease that degrades linear or supercoiled dsDNA from 5'-3'. Nicks and linearizes circular DNA. Activity is not stimulated by ATP or AMP-PNP, although it has DNA-stimulated ATPase activity. This Thermus scotoductus (strain ATCC 700910 / SA-01) protein is OLD nuclease.